The following is a 447-amino-acid chain: MREILHIQGGQCGNQIGSKFWEVVCDEHGIDPTGRYVGTSDLQLERVNVYYNEASCGRFVPRAVLMDLEPGTMDSVRTGPYGQIFRPDNFVFGQSGAGNNWAKGHYTEGAELIDSVLDVVRKEAENCDCLQGFQVCHSLGGGTGSGMGTLLISKIREEYPDRMMLTFSVFPSPKVSDTVVEPYNATLSVHQLVENADECMVLDNEALYDICFRTLKLTTPSFGDLNHLISATMSGVTCCLRFPGQLNSDLRKLAVNLIPFPRLHFFMVGFAPLTSRGSQQYRALTVPELTQQMWDAKNMMCAADPRHGRYLTASAMFRGKMSTKEVDEQMINVQNKNSSYFVEWIPNNVKSSVCDIPPRGLSMASTFIGNSTSIQEMFRRVSEQFTAMFRRKAFLHWYTGEGMDEMEFTEAESNMNDLVSEYQQYQDATADEEGDYEDEEEQVPEDE.

The GTP site is built by glutamine 11, glutamate 69, serine 138, glycine 142, threonine 143, glycine 144, asparagine 204, and asparagine 226. Position 69 (glutamate 69) interacts with Mg(2+). Over residues 411-427 (AESNMNDLVSEYQQYQD) the composition is skewed to polar residues. The segment at 411–447 (AESNMNDLVSEYQQYQDATADEEGDYEDEEEQVPEDE) is disordered. Residues 429–447 (TADEEGDYEDEEEQVPEDE) are compositionally biased toward acidic residues.

It belongs to the tubulin family. In terms of assembly, dimer of alpha and beta chains. A typical microtubule is a hollow water-filled tube with an outer diameter of 25 nm and an inner diameter of 15 nM. Alpha-beta heterodimers associate head-to-tail to form protofilaments running lengthwise along the microtubule wall with the beta-tubulin subunit facing the microtubule plus end conferring a structural polarity. Microtubules usually have 13 protofilaments but different protofilament numbers can be found in some organisms and specialized cells. The cofactor is Mg(2+). In terms of tissue distribution, expressed in leaf sheaths.

It is found in the cytoplasm. Its subcellular location is the cytoskeleton. Its function is as follows. Tubulin is the major constituent of microtubules, a cylinder consisting of laterally associated linear protofilaments composed of alpha- and beta-tubulin heterodimers. Microtubules grow by the addition of GTP-tubulin dimers to the microtubule end, where a stabilizing cap forms. Below the cap, tubulin dimers are in GDP-bound state, owing to GTPase activity of alpha-tubulin. This Oryza sativa subsp. japonica (Rice) protein is Tubulin beta-1 chain (TUBB1).